We begin with the raw amino-acid sequence, 443 residues long: Acyl transferase 10 (443 aa).

Active-site proton acceptor residues include H182 and D386.

It belongs to the plant acyltransferase family.

In terms of biological role, involved in the incorporation of ferulate into the cell wall. May act as arabinoxylan feruloyl transferase. May function as p-coumaroyl-CoA transferase involved in glucuronoarabinoxylan modification. The sequence is that of Acyl transferase 10 from Oryza sativa subsp. japonica (Rice).